The chain runs to 1350 residues: Nidogen (1350 aa).

An N-terminal signal peptide occupies residues 1–22 (MPTFGSKLLACLLLSSVILVSG). The region spanning 107–260 (AFYSNVDTSF…GVWLFEVAPI (154 aa)) is the NIDO domain. An N-linked (GlcNAc...) asparagine glycan is attached at N231. Positions 281–321 (LALSCQAHAHQCHEKAECHDKAEGYCCVCGSGFYGNGKSCL) constitute an EGF-like 1 domain. Cystine bridges form between C285-C298, C292-C307, and C309-C320. In terms of domain architecture, Nidogen G2 beta-barrel spans 325 to 550 (QPIRVTGTLT…GVTPESNACN (226 aa)). 2 N-linked (GlcNAc...) asparagine glycosylation sites follow: N423 and N480. An EGF-like 2 domain is found at 545-583 (ESNACNDGTADCVENSVCVPYEDTYRCDCYHGFAAQLDE). Disulfide bonds link C549/C562, C556/C571, C595/C608, C602/C617, and C619/C630. Positions 591-631 (DIDECATGSHVCDENAVCDNTEGGFNCYCTEGFEGNGYRCL) constitute an EGF-like 3; calcium-binding domain. N633 carries N-linked (GlcNAc...) asparagine glycosylation. Residues 645-691 (VEGQAEPTSEPSPNPSPYPDQGQDQEREREDDQYPQPNPYPYPEEQI) are disordered. EGF-like domains follow at residues 788–829 (DLIP…YNCD), 832–874 (SDDS…FNCQ), 912–953 (PAGR…TGCT), 955–996 (KPLS…YVCI), and 997–1037 (EEQN…SLCQ). Cystine bridges form between C792-C804, C798-C815, C817-C828, C836-C849, C843-C860, C862-C873, C916-C927, C921-C938, C940-C952, C959-C971, C965-C982, C984-C995, C1001-C1014, C1008-C1023, and C1025-C1036. The N-linked (GlcNAc...) asparagine glycan is linked to N801. A glycan (N-linked (GlcNAc...) asparagine) is linked at N1032. LDL-receptor class B repeat units lie at residues 1084-1126 (GRVY…DVIS), 1127-1170 (RRLY…DPYR), 1171-1216 (EKLF…LENS), and 1257-1282 (DQFY…QTPI).

In terms of tissue distribution, expressed in the basement membrane around the follicular epithelium of the adult ovary (at protein level).

It is found in the secreted. The protein localises to the extracellular space. The protein resides in the extracellular matrix. Its subcellular location is the basement membrane. Its function is as follows. Cell adhesion glycoprotein which is widely distributed in basement membranes. Involved in cell-extracellular matrix (ECM) interactions probably by connecting the laminin and collagen IV networks. Required for permeability and mechanical stability of basement membranes, and ECM dependent neural plasticity. Not involved in assembly of the embryonic basement membrane. The protein is Nidogen of Drosophila melanogaster (Fruit fly).